A 330-amino-acid polypeptide reads, in one-letter code: Molybdate/tungstate import ATP-binding protein WtpC (330 aa).

In terms of domain architecture, ABC transporter spans 3 to 232; the sequence is LMVEGISKDY…PASEEVAKFL (230 aa). ATP is bound at residue 34–41; the sequence is GPSGAGKT.

Belongs to the ABC transporter superfamily. Sulfate/tungstate importer (TC 3.A.1.6) family. The complex is composed of two ATP-binding proteins (WtpC), two transmembrane proteins (WtpB) and a solute-binding protein (WtpA).

Its subcellular location is the cell membrane. The enzyme catalyses tungstate(in) + ATP + H2O = tungstate(out) + ADP + phosphate + H(+). In terms of biological role, part of the ABC transporter complex WtpABC involved in molybdate/tungstate import. Responsible for energy coupling to the transport system. The chain is Molybdate/tungstate import ATP-binding protein WtpC (wtpC) from Thermococcus kodakarensis (strain ATCC BAA-918 / JCM 12380 / KOD1) (Pyrococcus kodakaraensis (strain KOD1)).